We begin with the raw amino-acid sequence, 431 residues long: MYRFAPSPTGDMHIGNLRAAIFNYICARQKNMDFILRIEDTDKARNIAGKEEEIKEILNLFSISWQHYYIQSENLKFHRQMALKLVSEKKAFACFCTEEELEAKKELAKKQGKAYRYDGTCEKLADIDVLECEKPFVIRLKKPTHTMKFTDFIKGELSFEPENIDSFVIMRTDKTPTYNFACAVDDMLENVTCIIRGEDHVSNTPKQEHIRASLGYNKAMTYAHLPIILNEEGVKMSKREAHSSVKWLLESGILPSAIANYLIMLGNKTPCEIFTLEEAIKWFDISKVSKAPARFDLKKLLQINREHIKMIKDDELNKILDLNKDLAQLAKFYTQETSTIKELKEKMQAIFNAKDFGEFETEYKILKELLKDIELFENYEDFKNELLNKSNLKGKKFFMPLRIILTGNIHGPELSDLYPYIKNFIHELARI.

The 'HIGH' region motif lies at proline 6–asparagine 16. A 'KMSKS' region motif is present at residues lysine 235–arginine 239. Residue lysine 238 coordinates ATP.

The protein belongs to the class-I aminoacyl-tRNA synthetase family. Glutamate--tRNA ligase type 1 subfamily. In terms of assembly, monomer.

Its subcellular location is the cytoplasm. It carries out the reaction tRNA(Glu) + L-glutamate + ATP = L-glutamyl-tRNA(Glu) + AMP + diphosphate. Its function is as follows. Catalyzes the attachment of glutamate to tRNA(Glu) in a two-step reaction: glutamate is first activated by ATP to form Glu-AMP and then transferred to the acceptor end of tRNA(Glu). The sequence is that of Glutamate--tRNA ligase 1 from Campylobacter jejuni subsp. jejuni serotype O:2 (strain ATCC 700819 / NCTC 11168).